Consider the following 323-residue polypeptide: Elongation factor P--(R)-beta-lysine ligase (323 aa).

Residue 74–76 coordinates substrate; that stretch reads SPE. ATP contacts are provided by residues 98-100 and asparagine 107; that span reads RNE. Tyrosine 116 provides a ligand contact to substrate. 242–243 serves as a coordination point for ATP; the sequence is EL. Glutamate 249 contributes to the substrate binding site. Glycine 298 provides a ligand contact to ATP.

The protein belongs to the class-II aminoacyl-tRNA synthetase family. EpmA subfamily. Homodimer.

The catalysed reaction is D-beta-lysine + L-lysyl-[protein] + ATP = N(6)-((3R)-3,6-diaminohexanoyl)-L-lysyl-[protein] + AMP + diphosphate + H(+). Functionally, with EpmB is involved in the beta-lysylation step of the post-translational modification of translation elongation factor P (EF-P). Catalyzes the ATP-dependent activation of (R)-beta-lysine produced by EpmB, forming a lysyl-adenylate, from which the beta-lysyl moiety is then transferred to the epsilon-amino group of a conserved specific lysine residue in EF-P. In Vibrio vulnificus (strain YJ016), this protein is Elongation factor P--(R)-beta-lysine ligase.